A 355-amino-acid chain; its full sequence is Double-stranded RNA-binding protein 4 (355 aa).

DRBM domains are found at residues 4 to 73 and 82 to 150; these read VYKG…SLTP and AYKN…SIKN. Residues 149–188 are compositionally biased toward polar residues; it reads KNGNSNQTGSPTLPSERQEDVNSNVKSSPQEIHSQPSSKV. Residues 149–193 form a disordered region; sequence KNGNSNQTGSPTLPSERQEDVNSNVKSSPQEIHSQPSSKVVMTPD.

As to quaternary structure, heterodimer with DRB1 or DRB5. Interacts with DCL4 and cauliflower mosaic virus (CaMV) transactivator/viroplasmin protein. Interaction with CaMV transactivator/viroplasmin protein inhibits RNA silencing ability of DRB4. As to expression, expressed in roots, leaf vasculature, shoot apical meristem (SAM) and developing anthers.

The protein resides in the nucleus. In terms of biological role, double-stranded RNA-binding protein involved in RNA-mediated post-transcriptional gene silencing (PTGS). Functions in the trans-acting small interfering RNAs (ta-siRNAs) biogenesis by binding and assisting DICER-LIKE 4 (DCL4). Required for DCL4 activity. Required for the 21 nucleotide ta-siRNAs production of the TAS3 transcript in leaves but not in flowers. Plays an important role in silencing RNA of both DNA and RNA viruses. Involved with argonaute 7 (AGO7) and RDR6 in turnip crinkle virus (TCV) silencing. May not be directly involved in viral siRNA production. May stabilize the 21 nucleotide viral siRNAs and deliver them to the RISC complex. Targeted by the viral silencing suppressor (VSR) transactivator/viroplasmin (TAV) protein of the cauliflower mosaic virus (CaMV) that inactivates DRB4 function in RNA silencing. Probably not involved in the guide strand selection from RNA duplexes. Involved in leaf morphology through its function in ta-siRNA-mediated silencing. The protein is Double-stranded RNA-binding protein 4 (DBR4) of Arabidopsis thaliana (Mouse-ear cress).